Reading from the N-terminus, the 315-residue chain is Probable cell division protein WhiA (315 aa).

Residues 280-313 (SLRELGKMLNPPVGKSGVNHRLRRIEKIADELKQ) constitute a DNA-binding region (H-T-H motif).

It belongs to the WhiA family.

Its function is as follows. Involved in cell division and chromosome segregation. The chain is Probable cell division protein WhiA from Clostridium botulinum (strain ATCC 19397 / Type A).